Here is a 1588-residue protein sequence, read N- to C-terminus: Paternally-expressed gene 3 protein (1588 aa).

Residues 46-128 (HQRFRNLIYV…TLLENYKEMY (83 aa)) form the SCAN box domain. 3 disordered regions span residues 128-231 (YQPE…YQNV), 265-304 (GHSH…RRGI), and 317-347 (KFIK…MSDD). Residues 129 to 142 (QPEDDNNSDVTSDD) show a composition bias toward acidic residues. 4 stretches are compositionally biased toward basic and acidic residues: residues 143–152 (DMTRNRRESS), 160–181 (FSDR…DRWS), 205–224 (FEMD…RSQD), and 293–304 (PEAKKSTHRRGI). C2H2-type zinc fingers lie at residues 452 to 474 (YVCD…QIMH), 505 to 527 (FECK…RKIH), and 563 to 585 (YECR…QKIH). Positions 588 to 607 (DDKDNEREHERERERERGET) are enriched in basic and acidic residues. Positions 588–608 (DDKDNEREHERERERERGETF) are disordered. The segment at 627–649 (YECKVCGETFLHSSSLKEHQKIH) adopts a C2H2-type 4 zinc-finger fold. Disordered regions lie at residues 839–889 (VASK…SKNR) and 905–929 (QKSV…SSNV). Positions 868-881 (LNDKRQKIPARENP) are enriched in basic and acidic residues. The segment at 969–991 (YECQECGECFAHSSDLTEHQKIH) adopts a C2H2-type 5 zinc-finger fold. Positions 1056-1104 (EKSHGEESQGENTDGEETHSEETHGQETIEDPVIQGSDMEDPQKDDPDD) are disordered. Basic and acidic residues predominate over residues 1071-1082 (EETHSEETHGQE). C2H2-type zinc fingers lie at residues 1107–1129 (YECE…QKVH), 1163–1185 (YECP…QRIH), 1225–1247 (IRCL…MRLH), 1282–1304 (FECA…VTVH), and 1332–1354 (YECK…KELH). Acidic residues predominate over residues 1396–1415 (EPEVEAAEPEVEAAEPEVEA). The tract at residues 1396–1495 (EPEVEAAEPE…GIEDPEEGED (100 aa)) is disordered. Tandem repeats lie at residues 1397–1403 (PEVEAAE), 1404–1410 (PEVEAAE), 1411–1417 (PEVEAAE), 1418–1422 (PNGEA), 1425–1429 (PDGEA), 1432–1436 (PIGEA), and 1439–1443 (PNGEA). The interval 1397–1417 (PEVEAAEPEVEAAEPEVEAAE) is 3 X 7 AA repeat of P-E-V-E-A-A-E. A 4 X 5 AA repeat of P-X-G-E-A region spans residues 1418–1443 (PNGEAEGPDGEAAEPIGEAGQPNGEA). Acidic residues-rich tracts occupy residues 1449-1466 (DADE…ERAE) and 1475-1495 (PEGD…EGED). C2H2-type zinc fingers lie at residues 1505–1527 (YDCH…LKTH) and 1564–1586 (FKCD…QNTH).

It belongs to the krueppel C2H2-type zinc-finger protein family. Homodimer. Interacts with SIAH1A and SIAH2. Interacts with TRAF2. As to expression, brain, glial cells, astrocytes, embryo, placenta, testis, ovary and uterus. In the placenta it is found in the layer of villous cytotrophoblast cells while in the ovary it is found in the cells of the ovarian stroma including the thecal layers around the follicles. Expression is highly repressed in glioma cell lines.

It is found in the nucleus. Its subcellular location is the cytoplasm. Functionally, induces apoptosis in cooperation with SIAH1A. Acts as a mediator between p53/TP53 and BAX in a neuronal death pathway that is activated by DNA damage. Acts synergistically with TRAF2 and inhibits TNF induced apoptosis through activation of NF-kappa-B. Possesses a tumor suppressing activity in glioma cells. The sequence is that of Paternally-expressed gene 3 protein (PEG3) from Homo sapiens (Human).